A 69-amino-acid polypeptide reads, in one-letter code: Chondroitin proteoglycan 9 (69 aa).

Residues 1–19 (MHLWQLVLLVILFFGAAFG) form the signal peptide. O-linked (Xyl...) (chondroitin sulfate) serine glycans are attached at residues serine 25 and serine 27.

This is Chondroitin proteoglycan 9 from Caenorhabditis elegans.